The following is a 48-amino-acid chain: Cytochrome b559 subunit beta (48 aa).

Residues W23–A39 traverse the membrane as a helical segment. H27 is a binding site for heme.

It belongs to the PsbE/PsbF family. As to quaternary structure, heterodimer of an alpha subunit and a beta subunit. PSII is composed of 1 copy each of membrane proteins PsbA, PsbB, PsbC, PsbD, PsbE, PsbF, PsbH, PsbI, PsbJ, PsbK, PsbL, PsbM, PsbT, PsbX, PsbY, Psb30/Ycf12, peripheral proteins PsbO, CyanoQ (PsbQ), PsbU, PsbV and a large number of cofactors. It forms dimeric complexes. Heme b serves as cofactor.

It is found in the cellular thylakoid membrane. Functionally, this b-type cytochrome is tightly associated with the reaction center of photosystem II (PSII). PSII is a light-driven water:plastoquinone oxidoreductase that uses light energy to abstract electrons from H(2)O, generating O(2) and a proton gradient subsequently used for ATP formation. It consists of a core antenna complex that captures photons, and an electron transfer chain that converts photonic excitation into a charge separation. The sequence is that of Cytochrome b559 subunit beta from Prochlorococcus marinus (strain SARG / CCMP1375 / SS120).